The chain runs to 100 residues: Large ribosomal subunit protein uL23 (100 aa).

Belongs to the universal ribosomal protein uL23 family. In terms of assembly, part of the 50S ribosomal subunit. Contacts protein L29, and trigger factor when it is bound to the ribosome.

Functionally, one of the early assembly proteins it binds 23S rRNA. One of the proteins that surrounds the polypeptide exit tunnel on the outside of the ribosome. Forms the main docking site for trigger factor binding to the ribosome. In Shewanella denitrificans (strain OS217 / ATCC BAA-1090 / DSM 15013), this protein is Large ribosomal subunit protein uL23.